The following is a 460-amino-acid chain: Ribosomal protein uS12 methylthiotransferase RimO (460 aa).

Positions 16-130 constitute an MTTase N-terminal domain; that stretch reads NKIHFISLGC…ILSAIESKEA (115 aa). The [4Fe-4S] cluster site is built by C25, C61, C93, C164, C168, and C171. A Radical SAM core domain is found at 150-382; sequence STPKHYAYLK…SQTQKKNVEK (233 aa). Positions 385–455 constitute a TRAM domain; that stretch reads KQLVGQIVEA…GYDLVGRVIK (71 aa).

It belongs to the methylthiotransferase family. RimO subfamily. [4Fe-4S] cluster serves as cofactor.

The protein localises to the cytoplasm. The enzyme catalyses L-aspartate(89)-[ribosomal protein uS12]-hydrogen + (sulfur carrier)-SH + AH2 + 2 S-adenosyl-L-methionine = 3-methylsulfanyl-L-aspartate(89)-[ribosomal protein uS12]-hydrogen + (sulfur carrier)-H + 5'-deoxyadenosine + L-methionine + A + S-adenosyl-L-homocysteine + 2 H(+). Its function is as follows. Catalyzes the methylthiolation of an aspartic acid residue of ribosomal protein uS12. The protein is Ribosomal protein uS12 methylthiotransferase RimO of Chlamydia caviae (strain ATCC VR-813 / DSM 19441 / 03DC25 / GPIC) (Chlamydophila caviae).